We begin with the raw amino-acid sequence, 207 residues long: LexA repressor (207 aa).

Residues 28–48 (VREIGEAVGLASSSTVHGHLS) constitute a DNA-binding region (H-T-H motif). Catalysis depends on for autocatalytic cleavage activity residues serine 130 and lysine 168.

Belongs to the peptidase S24 family. Homodimer.

It catalyses the reaction Hydrolysis of Ala-|-Gly bond in repressor LexA.. In terms of biological role, represses a number of genes involved in the response to DNA damage (SOS response), including recA and lexA. In the presence of single-stranded DNA, RecA interacts with LexA causing an autocatalytic cleavage which disrupts the DNA-binding part of LexA, leading to derepression of the SOS regulon and eventually DNA repair. The polypeptide is LexA repressor (Staphylococcus aureus (strain Mu3 / ATCC 700698)).